The chain runs to 449 residues: Keratin, type I cytoskeletal 27 (449 aa).

The tract at residues 1–73 (MSVRFSSASR…VNEHGLLSGN (73 aa)) is head. Residues 74-109 (EKVTMQNLNDRLASYLENVQALEEANADLEQKIKDW) are coil 1A. Residues 74-389 (EKVTMQNLND…LLIGGDEGSC (316 aa)) enclose the IF rod domain. The tract at residues 110–131 (YEKFGPGSCRGLDHDYSRYFPI) is linker 1. The interval 132–223 (IDDLRTQIIS…KNHEEEMQAL (92 aa)) is coil 1B. A linker 12 region spans residues 224–246 (QCAAGGNVNVEMNAAPGVDLTVL). The coil 2 stretch occupies residues 247–385 (LNNMRAEYEA…ETYCLLIGGD (139 aa)). The tract at residues 386-449 (EGSCVKSKGQ…NNKNEQRIPS (64 aa)) is tail. The disordered stretch occupies residues 425 to 449 (LSSRVHTLEEKSTKVNNKNEQRIPS). Residues 430–449 (HTLEEKSTKVNNKNEQRIPS) are compositionally biased toward basic and acidic residues.

This sequence belongs to the intermediate filament family. Heterotetramer of two type I and two type II keratins. Interacts with KRT6A to form filaments.

It is found in the cytoplasm. Its function is as follows. Essential for the proper assembly of type I and type II keratin protein complexes and formation of keratin intermediate filaments in the inner root sheath (irs). This Rattus norvegicus (Rat) protein is Keratin, type I cytoskeletal 27.